Reading from the N-terminus, the 215-residue chain is uncharacterized protein (215 aa).

5 helical membrane-spanning segments follow: residues 1-21 (MTAE…AIGM), 36-56 (VLIG…FADV), 67-87 (SRIA…NILV), 92-112 (IVGL…MVIG), and 118-138 (LGIY…QLTF).

This sequence belongs to the MgtC/SapB family.

The protein localises to the cell inner membrane. This is an uncharacterized protein from Escherichia coli O157:H7.